The primary structure comprises 476 residues: Amidophosphoribosyltransferase (476 aa).

Positions 1-11 (MLAEIKGLNEE) are excised as a propeptide. The active-site Nucleophile is the C12. Residues 12 to 231 (CGVFGIWGHE…PGEMLIINDE (220 aa)) form the Glutamine amidotransferase type-2 domain. C247 contacts [4Fe-4S] cluster. Mg(2+)-binding residues include S294, D356, and D357. [4Fe-4S] cluster is bound by residues C393, C448, and C451.

It in the C-terminal section; belongs to the purine/pyrimidine phosphoribosyltransferase family. As to quaternary structure, homotetramer. Mg(2+) is required as a cofactor. The cofactor is [4Fe-4S] cluster.

The catalysed reaction is 5-phospho-beta-D-ribosylamine + L-glutamate + diphosphate = 5-phospho-alpha-D-ribose 1-diphosphate + L-glutamine + H2O. It functions in the pathway purine metabolism; IMP biosynthesis via de novo pathway; N(1)-(5-phospho-D-ribosyl)glycinamide from 5-phospho-alpha-D-ribose 1-diphosphate: step 1/2. Allosterically regulated; subject to end product regulation by purine nucleotides. In terms of biological role, catalyzes the formation of phosphoribosylamine from phosphoribosylpyrophosphate (PRPP) and glutamine. The chain is Amidophosphoribosyltransferase from Bacillus subtilis (strain 168).